Here is a 100-residue protein sequence, read N- to C-terminus: Small ribosomal subunit protein bS18 (100 aa).

Residues 1-23 (MTFIRKPAGQAKPQKYSTDAYGR) are disordered.

The protein belongs to the bacterial ribosomal protein bS18 family. Part of the 30S ribosomal subunit. Forms a tight heterodimer with protein bS6.

Functionally, binds as a heterodimer with protein bS6 to the central domain of the 16S rRNA, where it helps stabilize the platform of the 30S subunit. The chain is Small ribosomal subunit protein bS18 from Endomicrobium trichonymphae.